The primary structure comprises 186 residues: Transposons Tn1721 resolvase (186 aa).

One can recognise a Resolvase/invertase-type recombinase catalytic domain in the interval 4–137; it reads HRIGYVRVSS…EGIALAKQRG (134 aa). Residue Ser-12 is the O-(5'-phospho-DNA)-serine intermediate of the active site. Positions 164-183 form a DNA-binding region, H-T-H motif; the sequence is KAQLAREFNISRETLYQYLR.

The protein belongs to the site-specific recombinase resolvase family.

Functionally, resolvase catalyzes the resolution (a site-specific recombination) of the cointegrated replicon to yield the final transposition products. The sequence is that of Transposons Tn1721 resolvase (tnpR) from Escherichia coli.